Consider the following 245-residue polypeptide: Probable transcriptional regulatory protein APH_0480 (245 aa).

The protein belongs to the TACO1 family.

The protein localises to the cytoplasm. This chain is Probable transcriptional regulatory protein APH_0480, found in Anaplasma phagocytophilum (strain HZ).